The chain runs to 328 residues: MTVPIAIIGTGIAGLSAAQALTAAGHQVHLFDKSRGSGGRMSSKRSDAGALDMGAQYFTARDRRFATAVKQWQAQGHVAEWTPLLYNFHAGRLSPSPDEQVRWVGKPGMSAITRAMRGDMPVSFSCRITEVFRGEEHWNLLDAEGQNHGPFSHVIIATPAPQASTLLAAAPKLASVVAGVKMDPTWAVALAFETPLQTPMQGCFVQDSPLDWLARNRSKPERDDTLDTWILHATSQWSRQNLDASREQVIEHLHGAFAELIDCTMPAPVFSLAHRWLYARPAGAHEWGALSDADLGIYVCGDWCLSGRVEGAWLSGQEAARRLLEHLQ.

FAD-binding positions include A13, 32-33 (DK), R40, and 56-57 (QY). Residues 57–61 (YFTAR) and 96–98 (SPD) contribute to the substrate site. Residue I128 coordinates FAD. Substrate is bound at residue T185. D302 is an FAD binding site. R308 is a substrate binding site. FAD is bound at residue V309.

It belongs to the bacterial renalase family. FAD serves as cofactor.

The catalysed reaction is 1,2-dihydro-beta-NAD + O2 + H(+) = H2O2 + NAD(+). It catalyses the reaction 1,2-dihydro-beta-NADP + O2 + H(+) = H2O2 + NADP(+). The enzyme catalyses 1,6-dihydro-beta-NADP + O2 + H(+) = H2O2 + NADP(+). It carries out the reaction 1,6-dihydro-beta-NAD + O2 + H(+) = H2O2 + NAD(+). Functionally, catalyzes the oxidation of the 1,2-dihydro- and 1,6-dihydro- isomeric forms of beta-NAD(P) back to beta-NAD(P)+. Has a preference for 1,2-dihydro-beta-NAD as substrate. May serve to protect primary metabolism dehydrogenases from inhibition by the 1,2-dihydro- and 1,6-dihydro-beta-NAD(P) isomers. The polypeptide is Renalase (Pseudomonas syringae pv. tomato (strain ATCC BAA-871 / DC3000)).